The sequence spans 1217 residues: DNA-directed RNA polymerase subunit beta' (1217 aa).

Zn(2+) contacts are provided by Cys-60, Cys-62, Cys-75, and Cys-78. The Mg(2+) site is built by Asp-449, Asp-451, and Asp-453. Residues Cys-818, Cys-892, Cys-899, and Cys-902 each contribute to the Zn(2+) site.

The protein belongs to the RNA polymerase beta' chain family. In terms of assembly, the RNAP catalytic core consists of 2 alpha, 1 beta, 1 beta' and 1 omega subunit. When a sigma factor is associated with the core the holoenzyme is formed, which can initiate transcription. Requires Mg(2+) as cofactor. Zn(2+) is required as a cofactor.

It carries out the reaction RNA(n) + a ribonucleoside 5'-triphosphate = RNA(n+1) + diphosphate. Functionally, DNA-dependent RNA polymerase catalyzes the transcription of DNA into RNA using the four ribonucleoside triphosphates as substrates. This chain is DNA-directed RNA polymerase subunit beta', found in Enterococcus faecalis (strain ATCC 700802 / V583).